A 559-amino-acid chain; its full sequence is Formate--tetrahydrofolate ligase (559 aa).

An ATP-binding site is contributed by 68-75 (TPAGEGKS).

This sequence belongs to the formate--tetrahydrofolate ligase family.

The catalysed reaction is (6S)-5,6,7,8-tetrahydrofolate + formate + ATP = (6R)-10-formyltetrahydrofolate + ADP + phosphate. Its pathway is one-carbon metabolism; tetrahydrofolate interconversion. In Lactobacillus gasseri (strain ATCC 33323 / DSM 20243 / BCRC 14619 / CIP 102991 / JCM 1131 / KCTC 3163 / NCIMB 11718 / NCTC 13722 / AM63), this protein is Formate--tetrahydrofolate ligase.